The primary structure comprises 644 residues: ATP-dependent zinc metalloprotease FtsH (644 aa).

At Met1–Asn11 the chain is on the stromal side. A helical membrane pass occupies residues Leu12–Ile32. Residues Gly33–Asn128 lie on the Lumenal side of the membrane. A helical transmembrane segment spans residues Ile129–Tyr149. Over Leu150–Asn644 the chain is Stromal. ATP is bound at residue Gly226–Thr233. His447 contributes to the Zn(2+) binding site. Glu448 is an active-site residue. Zn(2+) is bound by residues His451 and Asp525.

In the central section; belongs to the AAA ATPase family. The protein in the C-terminal section; belongs to the peptidase M41 family. Homohexamer. Requires Zn(2+) as cofactor.

It is found in the plastid. The protein resides in the chloroplast thylakoid membrane. Its function is as follows. Acts as a processive, ATP-dependent zinc metallopeptidase. This Trieres chinensis (Marine centric diatom) protein is ATP-dependent zinc metalloprotease FtsH.